The following is a 272-amino-acid chain: Ribosomal RNA small subunit methyltransferase A (272 aa).

Positions 18, 20, 45, 66, 91, and 113 each coordinate S-adenosyl-L-methionine.

Belongs to the class I-like SAM-binding methyltransferase superfamily. rRNA adenine N(6)-methyltransferase family. RsmA subfamily.

The protein localises to the cytoplasm. The enzyme catalyses adenosine(1518)/adenosine(1519) in 16S rRNA + 4 S-adenosyl-L-methionine = N(6)-dimethyladenosine(1518)/N(6)-dimethyladenosine(1519) in 16S rRNA + 4 S-adenosyl-L-homocysteine + 4 H(+). Its function is as follows. Specifically dimethylates two adjacent adenosines (A1518 and A1519) in the loop of a conserved hairpin near the 3'-end of 16S rRNA in the 30S particle. May play a critical role in biogenesis of 30S subunits. The polypeptide is Ribosomal RNA small subunit methyltransferase A (Yersinia pseudotuberculosis serotype O:1b (strain IP 31758)).